A 379-amino-acid polypeptide reads, in one-letter code: Flap endonuclease 1 (379 aa).

Positions 1-105 are N-domain; sequence MGVKGLNQLI…GELEKRLLRR (105 aa). Asp34 is a binding site for Mg(2+). The DNA site is built by Arg47 and Arg71. Residues Asp87, Glu159, Glu161, Asp180, and Asp182 each contribute to the Mg(2+) site. An I-domain region spans residues 123-254; that stretch reads DMVRYEKRTV…VTAFKLIKEH (132 aa). Residue Glu159 coordinates DNA. DNA-binding residues include Gly232 and Asp234. Asp234 is a Mg(2+) binding site. The tract at residues 341–349 is interaction with PCNA; sequence VQGRLDGFF. The interval 344–379 is disordered; the sequence is RLDGFFQSVPKPKDSADKKRKNDTKSAKSKKAKTRK. Residues 361–379 show a composition bias toward basic residues; sequence KKRKNDTKSAKSKKAKTRK.

This sequence belongs to the XPG/RAD2 endonuclease family. FEN1 subfamily. In terms of assembly, interacts with PCNA. Three molecules of FEN1 bind to one PCNA trimer with each molecule binding to one PCNA monomer. PCNA stimulates the nuclease activity without altering cleavage specificity. Mg(2+) is required as a cofactor. In terms of processing, phosphorylated. Phosphorylation upon DNA damage induces relocalization to the nuclear plasma.

It is found in the nucleus. It localises to the nucleolus. The protein resides in the nucleoplasm. Its subcellular location is the mitochondrion. Functionally, structure-specific nuclease with 5'-flap endonuclease and 5'-3' exonuclease activities involved in DNA replication and repair. During DNA replication, cleaves the 5'-overhanging flap structure that is generated by displacement synthesis when DNA polymerase encounters the 5'-end of a downstream Okazaki fragment. It enters the flap from the 5'-end and then tracks to cleave the flap base, leaving a nick for ligation. Also involved in the long patch base excision repair (LP-BER) pathway, by cleaving within the apurinic/apyrimidinic (AP) site-terminated flap. Acts as a genome stabilization factor that prevents flaps from equilibrating into structures that lead to duplications and deletions. Also possesses 5'-3' exonuclease activity on nicked or gapped double-stranded DNA, and exhibits RNase H activity. Also involved in replication and repair of rDNA and in repairing mitochondrial DNA. The sequence is that of Flap endonuclease 1 from Debaryomyces hansenii (strain ATCC 36239 / CBS 767 / BCRC 21394 / JCM 1990 / NBRC 0083 / IGC 2968) (Yeast).